A 442-amino-acid chain; its full sequence is Meiosis-specific with OB domain-containing protein (442 aa).

A DNA-binding region (OB) is located at residues 167–272 (IINVLAAVKS…EANILLNFIR (106 aa)).

Belongs to the MEIOB family. Component of a multiprotein complex with RPA2 and SPATA22. Interacts with SPATA22. Interacts with the complex BRME1:HSF2BP:BRCA2. In terms of tissue distribution, in fetal gonads, specifically expressed in the ovary starting at the 14th weeks post fertilization. In the adult, restricted to testis.

It localises to the cytoplasm. The protein localises to the nucleus. Its subcellular location is the chromosome. Functionally, single-stranded DNA-binding protein required for homologous recombination in meiosis I. Required for double strand breaks (DSBs) repair and crossover formation and promotion of faithful and complete synapsis. Not required for the initial loading of recombinases but required to maintain a proper number of RAD51 and DMC1 foci after the zygotene stage. May act by ensuring the stabilization of recombinases, which is required for successful homology search and meiotic recombination. Displays Single-stranded DNA 3'-5' exonuclease activity in vitro. This chain is Meiosis-specific with OB domain-containing protein, found in Homo sapiens (Human).